We begin with the raw amino-acid sequence, 166 residues long: Cofilin-2 (166 aa).

Positions 4 to 153 (GVTVNDEVIK…KDRSTLGEKL (150 aa)) constitute an ADF-H domain. A Phosphoserine modification is found at Ser24. Positions 30–34 (KKRKK) match the Nuclear localization signal motif.

It belongs to the actin-binding proteins ADF family. In terms of processing, the phosphorylation of Ser-24 may prevent recognition of the nuclear localization signal. In terms of tissue distribution, widely distributed in various tissues.

The protein resides in the nucleus matrix. Its subcellular location is the cytoplasm. It is found in the cytoskeleton. Controls reversibly actin polymerization and depolymerization in a pH-sensitive manner. It has the ability to bind G- and F-actin in a 1:1 ratio of cofilin to actin. It is the major component of intranuclear and cytoplasmic actin rods. The polypeptide is Cofilin-2 (CFL2) (Gallus gallus (Chicken)).